The sequence spans 342 residues: Heat-inducible transcription repressor HrcA (342 aa).

The protein belongs to the HrcA family.

In terms of biological role, negative regulator of class I heat shock genes (grpE-dnaK-dnaJ and groELS operons). Prevents heat-shock induction of these operons. In Oceanobacillus iheyensis (strain DSM 14371 / CIP 107618 / JCM 11309 / KCTC 3954 / HTE831), this protein is Heat-inducible transcription repressor HrcA.